Consider the following 622-residue polypeptide: V-type ATP synthase subunit I 1 (622 aa).

8 helical membrane passes run 306–326 (WVNL…YWEV), 328–348 (ISGF…ADAG), 373–393 (PAWC…ALVC), 428–448 (QMHV…LIVV), 459–479 (AEFG…NLIV), 485–505 (PLTG…FIFV), 532–552 (VFAD…GGAI), and 562–582 (PLFA…GHGL).

Belongs to the V-ATPase 116 kDa subunit family.

The protein resides in the cell membrane. Functionally, produces ATP from ADP in the presence of a proton gradient across the membrane. The protein is V-type ATP synthase subunit I 1 (atpI1) of Treponema pallidum (strain Nichols).